The sequence spans 227 residues: Ribonuclease 3 (227 aa).

Residues A6 to D128 enclose the RNase III domain. E41 is a binding site for Mg(2+). D45 is a catalytic residue. Positions 114 and 117 each coordinate Mg(2+). The active site involves E117. Residues D155–S225 enclose the DRBM domain. Positions G203–E212 are enriched in basic and acidic residues. Positions G203 to K227 are disordered.

It belongs to the ribonuclease III family. As to quaternary structure, homodimer. Mg(2+) is required as a cofactor.

It localises to the cytoplasm. The enzyme catalyses Endonucleolytic cleavage to 5'-phosphomonoester.. Its function is as follows. Digests double-stranded RNA. Involved in the processing of primary rRNA transcript to yield the immediate precursors to the large and small rRNAs (23S and 16S). Processes some mRNAs, and tRNAs when they are encoded in the rRNA operon. Processes pre-crRNA and tracrRNA of type II CRISPR loci if present in the organism. This Xylella fastidiosa (strain M12) protein is Ribonuclease 3.